A 303-amino-acid polypeptide reads, in one-letter code: Monoglyceride lipase (303 aa).

Position 10 is a phosphothreonine (T10). Y58 is subject to 3'-nitrotyrosine. S122 functions as the Nucleophile in the catalytic mechanism. A Phosphoserine modification is found at S189. Active-site charge relay system residues include D239 and H269.

Belongs to the AB hydrolase superfamily. Monoacylglycerol lipase family. In terms of assembly, homodimer. In terms of tissue distribution, ubiquitous.

It is found in the cytoplasm. The protein localises to the cytosol. Its subcellular location is the membrane. The enzyme catalyses Hydrolyzes glycerol monoesters of long-chain fatty acids.. The catalysed reaction is a 1-acylglycerol + H2O = glycerol + a fatty acid + H(+). It carries out the reaction a 2-acylglycerol + H2O = glycerol + a fatty acid + H(+). It catalyses the reaction 2-(5Z,8Z,11Z,14Z-eicosatetraenoyl)-glycerol + H2O = glycerol + (5Z,8Z,11Z,14Z)-eicosatetraenoate + H(+). The enzyme catalyses 1-octanoylglycerol + H2O = octanoate + glycerol + H(+). The catalysed reaction is 1-decanoylglycerol + H2O = decanoate + glycerol + H(+). It carries out the reaction 1-dodecanoylglycerol + H2O = dodecanoate + glycerol + H(+). It catalyses the reaction 1-tetradecanoylglycerol + H2O = tetradecanoate + glycerol + H(+). The enzyme catalyses 2-hexadecanoylglycerol + H2O = glycerol + hexadecanoate + H(+). The catalysed reaction is 1-(9Z-octadecenoyl)-glycerol + H2O = glycerol + (9Z)-octadecenoate + H(+). It carries out the reaction 2-(9Z-octadecenoyl)-glycerol + H2O = glycerol + (9Z)-octadecenoate + H(+). It catalyses the reaction 2-(9Z,12Z-octadecadienoyl)-glycerol + H2O = (9Z,12Z)-octadecadienoate + glycerol + H(+). The enzyme catalyses 1-(5Z,8Z,11Z,14Z-eicosatetraenoyl)-glycerol + H2O = glycerol + (5Z,8Z,11Z,14Z)-eicosatetraenoate + H(+). The catalysed reaction is 1-(9Z,12Z-octadecadienoyl)-glycerol + H2O = (9Z,12Z)-octadecadienoate + glycerol + H(+). It carries out the reaction 1-hexadecanoylglycerol + H2O = glycerol + hexadecanoate + H(+). It catalyses the reaction 1-octadecanoylglycerol + H2O = octadecanoate + glycerol + H(+). The enzyme catalyses prostaglandin E2 1-glyceryl ester + H2O = prostaglandin E2 + glycerol + H(+). The catalysed reaction is prostaglandin D2-1-glycerol ester + H2O = prostaglandin D2 + glycerol + H(+). It carries out the reaction 2-glyceryl-15-deoxy-Delta(12,14)-prostaglandin J2 + H2O = 15-deoxy-Delta(12,14)-prostaglandin J2 + glycerol + H(+). It catalyses the reaction prostaglandin F2alpha 1-glyceryl ester + H2O = prostaglandin F2alpha + glycerol + H(+). Its pathway is glycerolipid metabolism; triacylglycerol degradation. In terms of biological role, converts monoacylglycerides to free fatty acids and glycerol. Hydrolyzes the endocannabinoid 2-arachidonoylglycerol, and thereby contributes to the regulation of endocannabinoid signaling, nociperception and perception of pain. Regulates the levels of fatty acids that serve as signaling molecules and promote cancer cell migration, invasion and tumor growth. This is Monoglyceride lipase from Mus musculus (Mouse).